We begin with the raw amino-acid sequence, 371 residues long: Queuine tRNA-ribosyltransferase (371 aa).

Asp-90 functions as the Proton acceptor in the catalytic mechanism. Residues Asp-90–Phe-94, Asp-144, Gln-189, and Gly-215 each bind substrate. The tract at residues Gly-246 to Asn-252 is RNA binding. The active-site Nucleophile is Asp-265. Residues Thr-270–Arg-274 form an RNA binding; important for wobble base 34 recognition region. 4 residues coordinate Zn(2+): Cys-303, Cys-305, Cys-308, and His-334.

The protein belongs to the queuine tRNA-ribosyltransferase family. In terms of assembly, homodimer. Within each dimer, one monomer is responsible for RNA recognition and catalysis, while the other monomer binds to the replacement base PreQ1. Requires Zn(2+) as cofactor.

It catalyses the reaction 7-aminomethyl-7-carbaguanine + guanosine(34) in tRNA = 7-aminomethyl-7-carbaguanosine(34) in tRNA + guanine. The protein operates within tRNA modification; tRNA-queuosine biosynthesis. In terms of biological role, catalyzes the base-exchange of a guanine (G) residue with the queuine precursor 7-aminomethyl-7-deazaguanine (PreQ1) at position 34 (anticodon wobble position) in tRNAs with GU(N) anticodons (tRNA-Asp, -Asn, -His and -Tyr). Catalysis occurs through a double-displacement mechanism. The nucleophile active site attacks the C1' of nucleotide 34 to detach the guanine base from the RNA, forming a covalent enzyme-RNA intermediate. The proton acceptor active site deprotonates the incoming PreQ1, allowing a nucleophilic attack on the C1' of the ribose to form the product. After dissociation, two additional enzymatic reactions on the tRNA convert PreQ1 to queuine (Q), resulting in the hypermodified nucleoside queuosine (7-(((4,5-cis-dihydroxy-2-cyclopenten-1-yl)amino)methyl)-7-deazaguanosine). The chain is Queuine tRNA-ribosyltransferase from Helicobacter pylori (strain G27).